The chain runs to 626 residues: Chaperone protein HtpG (626 aa).

An a; substrate-binding region spans residues 1 to 329; the sequence is MSEETLSFQA…SSDLPLNVSR (329 aa). The b stretch occupies residues 330 to 549; it reads EMLQDDPRLR…EGAMSLHLQK (220 aa). The c stretch occupies residues 550–626; the sequence is LLRQANQGSE…LTEVMGKGLI (77 aa).

The protein belongs to the heat shock protein 90 family. Homodimer.

The protein resides in the cytoplasm. Functionally, molecular chaperone. Has ATPase activity. The protein is Chaperone protein HtpG of Rhodospirillum rubrum (strain ATCC 11170 / ATH 1.1.1 / DSM 467 / LMG 4362 / NCIMB 8255 / S1).